The sequence spans 70 residues: Turripeptide Lol9.1 (70 aa).

The N-terminal stretch at 1–20 (MKVYCLLLVLLVGLVSQAHG) is a signal peptide. In terms of domain architecture, Kazal-like spans 21–70 (KPTKRCLSVCSAEYEPVCGSDGKTYANKCHLMTEACWSPTSITLVHEGKC). Intrachain disulfides connect cysteine 26/cysteine 56, cysteine 30/cysteine 49, and cysteine 38/cysteine 70.

The protein belongs to the conopeptide P-like superfamily. As to expression, expressed by the venom duct.

It localises to the secreted. Functionally, acts as a neurotoxin by inhibiting an ion channel. May also act as a serine protease inhibitor, since it possess the kazal serine protease inhibitor signature. In Iotyrris olangoensis (Sea snail), this protein is Turripeptide Lol9.1.